We begin with the raw amino-acid sequence, 89 residues long: Small ribosomal subunit protein uS15 (89 aa).

Positions 1 to 21 are enriched in basic and acidic residues; the sequence is MVLDPTQKKSVIDAHAKHEGD. The interval 1-24 is disordered; it reads MVLDPTQKKSVIDAHAKHEGDTGS.

The protein belongs to the universal ribosomal protein uS15 family. As to quaternary structure, part of the 30S ribosomal subunit. Forms a bridge to the 50S subunit in the 70S ribosome, contacting the 23S rRNA.

One of the primary rRNA binding proteins, it binds directly to 16S rRNA where it helps nucleate assembly of the platform of the 30S subunit by binding and bridging several RNA helices of the 16S rRNA. Functionally, forms an intersubunit bridge (bridge B4) with the 23S rRNA of the 50S subunit in the ribosome. This chain is Small ribosomal subunit protein uS15, found in Desulfovibrio desulfuricans (strain ATCC 27774 / DSM 6949 / MB).